Consider the following 454-residue polypeptide: Phosphoglucosamine mutase (454 aa).

Serine 104 serves as the catalytic Phosphoserine intermediate. The Mg(2+) site is built by serine 104, aspartate 241, aspartate 243, and aspartate 245. Serine 104 bears the Phosphoserine mark.

It belongs to the phosphohexose mutase family. Mg(2+) is required as a cofactor. In terms of processing, activated by phosphorylation.

The catalysed reaction is alpha-D-glucosamine 1-phosphate = D-glucosamine 6-phosphate. Its function is as follows. Catalyzes the conversion of glucosamine-6-phosphate to glucosamine-1-phosphate. The chain is Phosphoglucosamine mutase from Paenarthrobacter aurescens (strain TC1).